Consider the following 352-residue polypeptide: N-acetyl-gamma-glutamyl-phosphate reductase (352 aa).

Cys-156 is an active-site residue.

It belongs to the NAGSA dehydrogenase family. Type 1 subfamily.

It is found in the cytoplasm. The catalysed reaction is N-acetyl-L-glutamate 5-semialdehyde + phosphate + NADP(+) = N-acetyl-L-glutamyl 5-phosphate + NADPH + H(+). Its pathway is amino-acid biosynthesis; L-arginine biosynthesis; N(2)-acetyl-L-ornithine from L-glutamate: step 3/4. Catalyzes the NADPH-dependent reduction of N-acetyl-5-glutamyl phosphate to yield N-acetyl-L-glutamate 5-semialdehyde. The chain is N-acetyl-gamma-glutamyl-phosphate reductase from Afipia carboxidovorans (strain ATCC 49405 / DSM 1227 / KCTC 32145 / OM5) (Oligotropha carboxidovorans).